Reading from the N-terminus, the 2833-residue chain is Reticulocyte-binding protein 1 (2833 aa).

The first 22 residues, M1–G22, serve as a signal peptide directing secretion. Residues E75 to H91 show a composition bias toward basic and acidic residues. 3 disordered regions span residues E75–F95, H112–E133, and K819–R860. Over residues K819 to S836 the composition is skewed to basic and acidic residues. Acidic residues predominate over residues V837 to Q849. A Cell attachment site motif is present at residues R2563–D2565. The tract at residues E2619–S2755 is disordered. Basic and acidic residues-rich tracts occupy residues N2621–A2633 and E2640–V2652. Residues M2655 to E2670 show a composition bias toward polar residues. The segment covering L2706 to M2720 has biased composition (acidic residues). Residues T2731–N2742 are compositionally biased toward basic and acidic residues. Positions T2743 to S2755 are enriched in polar residues.

As to quaternary structure, homodimer.

Its subcellular location is the membrane. Its function is as follows. Involved in reticulocyte adhesion. Specifically binds to human reticulocyte cells. The sequence is that of Reticulocyte-binding protein 1 (RBP1) from Plasmodium vivax (strain Belem).